A 237-amino-acid polypeptide reads, in one-letter code: tRNA1(Val) (adenine(37)-N6)-methyltransferase (237 aa).

It belongs to the methyltransferase superfamily. tRNA (adenine-N(6)-)-methyltransferase family.

It is found in the cytoplasm. The enzyme catalyses adenosine(37) in tRNA1(Val) + S-adenosyl-L-methionine = N(6)-methyladenosine(37) in tRNA1(Val) + S-adenosyl-L-homocysteine + H(+). Specifically methylates the adenine in position 37 of tRNA(1)(Val) (anticodon cmo5UAC). This Bacteroides fragilis (strain YCH46) protein is tRNA1(Val) (adenine(37)-N6)-methyltransferase.